The sequence spans 100 residues: Toxin ParE3 (100 aa).

It belongs to the RelE toxin family.

Functionally, toxic component of a type II toxin-antitoxin (TA) system. Its toxic effect is neutralized by coexpression with cognate antitoxin ParD3 but no other ParD or RelB antitoxin. This Caulobacter vibrioides (strain ATCC 19089 / CIP 103742 / CB 15) (Caulobacter crescentus) protein is Toxin ParE3 (parE3).